Here is a 41-residue protein sequence, read N- to C-terminus: Peptide Hact-SCRiP1 (41 aa).

Cystine bridges form between cysteine 5–cysteine 37, cysteine 12–cysteine 31, cysteine 19–cysteine 38, and cysteine 26–cysteine 39.

Expressed in tentacles.

The protein localises to the nematocyst. The protein resides in the secreted. Peptide with unknown function. Does not exhibit any effect on human ion channel TRPV1 in a Xenopus laevis oocytes assay. The protein is Peptide Hact-SCRiP1 of Heliofungia actiniformis (Mushroom coral).